A 1009-amino-acid polypeptide reads, in one-letter code: MSGVSEPLSRVKVGTLRRPEGPPEPMVVVPVDVEKEDVRILKVCFYSNSFNPGKNFKLVKCTVQTEIQEIITSILLSGRIGPNIQLAECYGLRLKHMKSDEIHWLHPQMTVGEVQDKYECLHVEAEWRYDLQIRYLPEDFMESLKEDRTTLLYFYQQLRNDYMQRYASKVSEGMALQLGCLELRRFFKDMPHNALDKKSNFELLEKEVGLDLFFPKQMQENLKPKQFRKMIQQTFQQYASLREEECVMKFFNTLAGFANIDQETYRCELIQGWNITVDLVIGPKGIRQLTSQDTKPTCLAEFKQIKSIRCLPLEETQAVLQLGIEGAPQSLSIKTSSLAEAENMADLIDGYCRLQGEHKGSLIMHAKKDGEKRNSLPQIPTLNLEARRSHLSESCSIESDIYAEIPDETLRRPGGPQYGVAREEVVLNRILGEGFFGEVYEGVYTNHKGEKINVAVKTCKKDCTQDNKEKFMSEAVIMKNLDHPHIVKLIGIIEEEPTWIIMELYPYGELGHYLERNKNSLKVPTLVLYTLQICKAMAYLESINCVHRDIAVRNILVASPECVKLGDFGLSRYIEDEDYYKASVTRLPIKWMSPESINFRRFTTASDVWMFAVCMWEILSFGKQPFFWLENKDVIGVLEKGDRLPKPELCPPVLYTLMTRCWDYDPSDRPRFTELVCSLSDIYQMEKDIAIEQERNARYRPPKILEPTTFQEPPPKPSRPKYRPPPQTNLLAPKLQFQVPEGLCASSPTLTSPMEYPSPVNSLHTPPLHRHNVFKRHSMREEDFIRPSSREEAQQLWEAEKIKMKQVLERQQKQMVEDSQWLRREERCLDPMVYMNDKSPLTPEKEAGYTEFTGPPQKPPRLGAQSIQPTANLDRTDDLVYHNVMTLVEAVLELKNKLGQLPPEDYVVVVKNVGLNLRKLIGSVDDLLPSLPASSRTEIEGTQKLLNKDLAELINKMKLAQQNAVTSLSEDCKRQMLTASHTLAVDAKNLLDAVDQAKVVANLAHPPAE.

In terms of domain architecture, FERM spans 39-359 (RILKVCFYSN…GYCRLQGEHK (321 aa)). A phosphoserine mark is found at S361, S375, and S399. The residue at position 402 (Y402) is a Phosphotyrosine; by autocatalysis. In terms of domain architecture, Protein kinase spans 425–683 (VVLNRILGEG…ELVCSLSDIY (259 aa)). Residues 431-439 (LGEGFFGEV), K457, and 503-509 (ELYPYGE) contribute to the ATP site. The Proton acceptor role is filled by D549. The residue at position 579 (Y579) is a Phosphotyrosine. Position 580 is a phosphotyrosine; by SRC, FYN and LCK (Y580). The disordered stretch occupies residues 696–728 (NARYRPPKILEPTTFQEPPPKPSRPKYRPPPQT). Over residues 712–727 (EPPPKPSRPKYRPPPQ) the composition is skewed to pro residues. Phosphotyrosine is present on Y722. S762 bears the Phosphoserine mark. A Phosphothreonine modification is found at T765. The interaction with TGFB1I1 stretch occupies residues 801 to 1009 (KIKMKQVLER…VANLAHPPAE (209 aa)). Y834 is modified (phosphotyrosine). Residue S839 is modified to Phosphoserine. T842 is modified (phosphothreonine). The residue at position 849 (Y849) is a Phosphotyrosine. S866 carries the phosphoserine modification. The segment at 868 to 1009 (QPTANLDRTD…VANLAHPPAE (142 aa)) is focal adhesion targeting (FAT). The residue at position 881 (Y881) is a Phosphotyrosine.

It belongs to the protein kinase superfamily. Tyr protein kinase family. FAK subfamily. In terms of assembly, homodimer, or homooligomer. Interacts with KCNA2. Interacts with NPHP1, ASAP1, ASAP2, ARHGAP26, SKAP2 and TGFB1I1. The Tyr-402 phosphorylated form interacts with SRC (via SH2 domain) and SRC family members. Forms a signaling complex with EPHA1, LCK and phosphatidylinositol 3-kinase; upon activation by EFNA1. Interacts with GRB2 (via SH2 domain). Interacts with P53/TP53 and MDM2. Interacts with MYLK. Interacts with BCAR1. Interacts with RB1CC1. Interacts with RHOU. Interacts with VAV1. Interacts with PDPK1. Interacts with DLG4. Interacts with LPXN and PTPN12. Interacts with SIRPA and SH2D3C. Interacts (hypophosphorylated) with PXN. Interacts with ARHGAP10. In terms of processing, phosphorylated on tyrosine residues in response to various stimuli that elevate the intracellular calcium concentration; this activation is indirect and may be mediated by production of reactive oxygen species (ROS). Tyr-402 is the major autophosphorylation site, but other kinases can also phosphorylate Tyr-402. Autophosphorylation occurs in trans, i.e. one subunit of the dimeric receptor phosphorylates tyrosine residues on the other subunit. Phosphorylation at Tyr-402 promotes interaction with SRC and SRC family members, leading to phosphorylation at Tyr-579; Tyr-580 and Tyr-881. Phosphorylation at Tyr-881 is important for interaction with GRB2. Phosphorylated on tyrosine residues upon activation of FGR and PKC. Recruitment by NPHP1 to cell matrix adhesions initiates Tyr-402 phosphorylation. In monocytes, adherence to substrata is required for tyrosine phosphorylation and kinase activation. Angiotensin II, thapsigargin and L-alpha-lysophosphatidic acid (LPA) also induce autophosphorylation and increase kinase activity. Phosphorylation by MYLK promotes ITGB2 activation and is thus essential to trigger neutrophil transmigration during lung injury. Dephosphorylated by PTPN12.

Its subcellular location is the cytoplasm. The protein resides in the perinuclear region. The protein localises to the cell membrane. It localises to the cell junction. It is found in the focal adhesion. Its subcellular location is the cell projection. The protein resides in the lamellipodium. The protein localises to the cell cortex. It localises to the nucleus. The catalysed reaction is L-tyrosyl-[protein] + ATP = O-phospho-L-tyrosyl-[protein] + ADP + H(+). Activated in response to stimuli that lead to increased intracellular Ca(2+) levels; this activation is indirect and may be mediated by calcium-mediated production of reactive oxygen species (ROS). Activated by autophosphorylation at Tyr-402; this creates a binding site for SRC family kinases and leads to phosphorylation at additional tyrosine residues. Phosphorylation at Tyr-402, Tyr-579 and Tyr-580 is required for optimal kinase activity. Its function is as follows. Non-receptor protein-tyrosine kinase that regulates reorganization of the actin cytoskeleton, cell polarization, cell migration, adhesion, spreading and bone remodeling. Plays a role in the regulation of the humoral immune response, and is required for normal levels of marginal B-cells in the spleen and normal migration of splenic B-cells. Required for normal macrophage polarization and migration towards sites of inflammation. Regulates cytoskeleton rearrangement and cell spreading in T-cells, and contributes to the regulation of T-cell responses. Promotes osteoclastic bone resorption; this requires both PTK2B/PYK2 and SRC. May inhibit differentiation and activity of osteoprogenitor cells. Functions in signaling downstream of integrin and collagen receptors, immune receptors, G-protein coupled receptors (GPCR), cytokine, chemokine and growth factor receptors, and mediates responses to cellular stress. Forms multisubunit signaling complexes with SRC and SRC family members upon activation; this leads to the phosphorylation of additional tyrosine residues, creating binding sites for scaffold proteins, effectors and substrates. Regulates numerous signaling pathways. Promotes activation of phosphatidylinositol 3-kinase and of the AKT1 signaling cascade. Promotes activation of NOS3. Regulates production of the cellular messenger cGMP. Promotes activation of the MAP kinase signaling cascade, including activation of MAPK1/ERK2, MAPK3/ERK1 and MAPK8/JNK1. Promotes activation of Rho family GTPases, such as RHOA and RAC1. Recruits the ubiquitin ligase MDM2 to P53/TP53 in the nucleus, and thereby regulates P53/TP53 activity, P53/TP53 ubiquitination and proteasomal degradation. Acts as a scaffold, binding to both PDPK1 and SRC, thereby allowing SRC to phosphorylate PDPK1 at 'Tyr-9, 'Tyr-373', and 'Tyr-376'. Promotes phosphorylation of NMDA receptors by SRC family members, and thereby contributes to the regulation of NMDA receptor ion channel activity and intracellular Ca(2+) levels. May also regulate potassium ion transport by phosphorylation of potassium channel subunits. Phosphorylates SRC; this increases SRC kinase activity. Phosphorylates ASAP1, NPHP1, KCNA2 and SHC1. Promotes phosphorylation of ASAP2, RHOU and PXN; this requires both SRC and PTK2/PYK2. This Mus musculus (Mouse) protein is Protein-tyrosine kinase 2-beta (Ptk2b).